The sequence spans 201 residues: Large ribosomal subunit protein uL4 (201 aa).

Residues 45-72 (AQKTRAEVTGSGKKPWRQKGTGRARAGS) are disordered.

Belongs to the universal ribosomal protein uL4 family. Part of the 50S ribosomal subunit.

In terms of biological role, one of the primary rRNA binding proteins, this protein initially binds near the 5'-end of the 23S rRNA. It is important during the early stages of 50S assembly. It makes multiple contacts with different domains of the 23S rRNA in the assembled 50S subunit and ribosome. Its function is as follows. Forms part of the polypeptide exit tunnel. This is Large ribosomal subunit protein uL4 from Shewanella baltica (strain OS223).